We begin with the raw amino-acid sequence, 980 residues long: SLIT and NTRK-like protein 3 (980 aa).

Residues 1–27 form the signal peptide; the sequence is MMKPSIAEMLHRGRMLWIILLSTIALG. Over 30–655 the chain is Extracellular; sequence TPIPLIEDSE…SPPGGPVPLS (626 aa). N-linked (GlcNAc...) asparagine glycosylation is present at N69. LRR repeat units follow at residues 79–100, 103–124, 127–148, 151–172, 175–196, and 198–219; these read RPFK…SFLH, NAVS…AFNG, ILKR…TFLG, SLEY…AFRN, KLRV…LFKA, and SLTH…GMLD. The region spanning 233–284 is the LRRCT 1 domain; that stretch reads NPWNCTCEIVQLKSWLERIPYTALVGDITCETPFHFHGKDLREIKKTELCPL. The interval 326-361 is disordered; sequence EYKSSNKQPKPTKQPRTPRPPSTSQALYPGPNQPPI. One can recognise an LRRNT domain in the interval 365–407; the sequence is QTRPPIPIICPTGCTCNLHINDLGLTVNCKERGFNNISELLPR. 6 LRR repeats span residues 410-431, 434-455, 458-479, 482-503, 506-527, and 529-550; these read NAKK…DFWN, SLDL…AFIN, NLKS…MFRG, SLHY…AFSL, NLKL…AFAG, and SLAR…GVLE. In terms of domain architecture, LRRCT 2 spans 563-614; sequence NPWDCTCDLVPFKQWIETISSVSVVGDVLCRTPENLTHRDVRTIELEVLCPE. An N-linked (GlcNAc...) asparagine glycan is attached at N597. Positions 622–644 are disordered; sequence GPSPPQPGDYHPNGGPTSASPYE. A helical transmembrane segment spans residues 656 to 676; that stretch reads VLILSLLVLFFSAVFVAAGLF. At 677–980 the chain is on the cytoplasmic side; the sequence is AYVLRRRRKK…EVLEKTAYRF (304 aa). 2 disordered regions span residues 709-735 and 762-785; these read LFED…EKAP and EEEV…GTQP. Gly residues predominate over residues 715-725; the sequence is GNSGGSGGGGR.

The protein belongs to the SLITRK family. As to expression, broadly expressed in embryonic brain with highest expression in cortical plate, pyramidal cell layer of the hippocampus, thalamus and hypothalamus.

It is found in the membrane. Its function is as follows. Suppresses neurite outgrowth. This Mus musculus (Mouse) protein is SLIT and NTRK-like protein 3 (Slitrk3).